A 209-amino-acid polypeptide reads, in one-letter code: MKRQYKNTKKEFLGACFLGIVALFSLTIWHVINRTSKNKSYKVFVEFDSAYGIQEGTSVRLRGLPIGKVVGISQSSHSILTRIEIQSCNTIIPKTSLIETNQTGLLNDTIIDIVPFTTLNQEYHSLKEGPLSKTCDSNQIICHLNYLQGERGLNYDDLIRATTRISQRFDDPELFYGLYYLIGNMLKLSSNLVDCTEYMASISHFLGYK.

Its subcellular location is the plastid. The protein resides in the chloroplast. This is an uncharacterized protein from Porphyra purpurea (Red seaweed).